Here is a 408-residue protein sequence, read N- to C-terminus: Peptidase T (408 aa).

Histidine 78 serves as a coordination point for Zn(2+). The active site involves aspartate 80. Aspartate 141 lines the Zn(2+) pocket. Glutamate 175 serves as the catalytic Proton acceptor. Residues glutamate 176, aspartate 198, and histidine 380 each contribute to the Zn(2+) site.

The protein belongs to the peptidase M20B family. The cofactor is Zn(2+).

Its subcellular location is the cytoplasm. The enzyme catalyses Release of the N-terminal residue from a tripeptide.. In terms of biological role, cleaves the N-terminal amino acid of tripeptides. In Clostridium botulinum (strain Langeland / NCTC 10281 / Type F), this protein is Peptidase T.